The following is a 497-amino-acid chain: Argininosuccinate lyase (497 aa).

Belongs to the lyase 1 family. Argininosuccinate lyase subfamily.

The protein resides in the cytoplasm. It carries out the reaction 2-(N(omega)-L-arginino)succinate = fumarate + L-arginine. It functions in the pathway amino-acid biosynthesis; L-arginine biosynthesis; L-arginine from L-ornithine and carbamoyl phosphate: step 3/3. This is Argininosuccinate lyase from Clavibacter michiganensis subsp. michiganensis (strain NCPPB 382).